A 589-amino-acid chain; its full sequence is Intermediate filament protein B (589 aa).

The interval 1–84 (SLKQSQESSE…LEATDKEKKE (84 aa)) is head. One can recognise an IF rod domain in the interval 81 to 433 (EKKEMQGLND…KMLEGEESRV (353 aa)). The interval 85–116 (MQGLNDRLGNYIDRVKKLEEQNRKLVADLDEL) is coil 1A. The segment at 117–130 (RGRWGKDTSEIKIQ) is linker 1. The tract at residues 131–268 (YSDSLRDARK…RVHEQEVKEL (138 aa)) is coil 1B. The linker 12 stretch occupies residues 269-285 (QALLAQAPADTREFFKN). A coil 2 region spans residues 286-433 (ELALAIRDIK…KMLEGEESRV (148 aa)). The tail stretch occupies residues 434-589 (GLRQMVEQVV…HTQKTIQTGQ (156 aa)). The tract at residues 446-470 (HSLQQQEDTDSTRNVRGEVSTKTTF) is disordered. Positions 466-584 (TKTTFQRSAK…DERATHTQKT (119 aa)) constitute an LTD domain.

This sequence belongs to the intermediate filament family. As to quaternary structure, a and B can form homopolymers. Giant body muscle cells.

Its subcellular location is the cytoplasm. This chain is Intermediate filament protein B, found in Ascaris suum (Pig roundworm).